Consider the following 162-residue polypeptide: uncharacterized protein (162 aa).

This sequence belongs to the baculoviridae 19 kDa protein family.

This is an uncharacterized protein from Tortricidae (ClGV).